A 93-amino-acid chain; its full sequence is Small ribosomal subunit protein uS19c (93 aa).

This sequence belongs to the universal ribosomal protein uS19 family.

The protein localises to the plastid. The protein resides in the chloroplast. Its function is as follows. Protein S19 forms a complex with S13 that binds strongly to the 16S ribosomal RNA. This Tetradesmus obliquus (Green alga) protein is Small ribosomal subunit protein uS19c.